We begin with the raw amino-acid sequence, 443 residues long: ATP-dependent protease ATPase subunit HslU (443 aa).

ATP-binding positions include isoleucine 18, 60–65 (GVGKTE), aspartate 256, glutamate 321, and arginine 393.

It belongs to the ClpX chaperone family. HslU subfamily. In terms of assembly, a double ring-shaped homohexamer of HslV is capped on each side by a ring-shaped HslU homohexamer. The assembly of the HslU/HslV complex is dependent on binding of ATP.

The protein resides in the cytoplasm. Functionally, ATPase subunit of a proteasome-like degradation complex; this subunit has chaperone activity. The binding of ATP and its subsequent hydrolysis by HslU are essential for unfolding of protein substrates subsequently hydrolyzed by HslV. HslU recognizes the N-terminal part of its protein substrates and unfolds these before they are guided to HslV for hydrolysis. The chain is ATP-dependent protease ATPase subunit HslU from Salmonella arizonae (strain ATCC BAA-731 / CDC346-86 / RSK2980).